The following is a 208-amino-acid chain: Recombination protein RecR (208 aa).

The C4-type zinc-finger motif lies at 60–75; that stretch reads CKVCHNICDDEVCSIC. A Toprim domain is found at 83-178; sequence SLVCVVENIK…RISVIARGVS (96 aa).

Belongs to the RecR family.

Its function is as follows. May play a role in DNA repair. It seems to be involved in an RecBC-independent recombinational process of DNA repair. It may act with RecF and RecO. The protein is Recombination protein RecR of Parabacteroides distasonis (strain ATCC 8503 / DSM 20701 / CIP 104284 / JCM 5825 / NCTC 11152).